Here is a 255-residue protein sequence, read N- to C-terminus: Aquaporin TIP4-1 (255 aa).

2 helical membrane-spanning segments follow: residues 25 to 45 (AVLA…SAAM) and 61 to 81 (TLAA…TAGF). The NPA 1 signature appears at 89-91 (NPA). 3 consecutive transmembrane segments (helical) span residues 108–128 (VLYV…LRFL), 148–168 (GLVM…AMIL), and 176–196 (AIGP…GGNF). The NPA 2 signature appears at 202–204 (NPA). Residues 223–243 (WIGPLLGGPLAGFVYESLFLV) traverse the membrane as a helical segment.

Belongs to the MIP/aquaporin (TC 1.A.8) family. TIP (TC 1.A.8.10) subfamily.

It is found in the vacuole membrane. Aquaporins facilitate the transport of water and small neutral solutes across cell membranes. The polypeptide is Aquaporin TIP4-1 (TIP4-1) (Zea mays (Maize)).